Consider the following 268-residue polypeptide: tRNA pseudouridine synthase A (268 aa).

Residue Asp52 is the Nucleophile of the active site. Tyr110 provides a ligand contact to substrate.

Belongs to the tRNA pseudouridine synthase TruA family. In terms of assembly, homodimer.

It catalyses the reaction uridine(38/39/40) in tRNA = pseudouridine(38/39/40) in tRNA. Its function is as follows. Formation of pseudouridine at positions 38, 39 and 40 in the anticodon stem and loop of transfer RNAs. The chain is tRNA pseudouridine synthase A from Prochlorococcus marinus (strain AS9601).